A 612-amino-acid chain; its full sequence is Coagulation factor XII (612 aa).

Residues 1–19 (MRALLLLGALLVSLESTVS) form the signal peptide. The Fibronectin type-II domain maps to 42 to 90 (VTGEPCHFPFQYHRQLHHKCIHRGRPGPRPWCATTPNFEKDQRWAYCLE). Disulfide bonds link Cys-47–Cys-73, Cys-61–Cys-88, Cys-98–Cys-110, Cys-104–Cys-119, Cys-121–Cys-130, Cys-135–Cys-163, Cys-161–Cys-170, Cys-178–Cys-189, Cys-183–Cys-198, Cys-200–Cys-209, Cys-217–Cys-306, Cys-240–Cys-288, Cys-268–Cys-301, Cys-355–Cys-482, Cys-393–Cys-409, Cys-401–Cys-471, Cys-432–Cys-435, Cys-498–Cys-566, Cys-529–Cys-545, and Cys-556–Cys-587. The 38-residue stretch at 94–131 (VKDHCSKHNPCQKGGTCVNMPDGPRCICADHFTGKHCQ) folds into the EGF-like 1 domain. Thr-109 is a glycosylation site (O-linked (Fuc) threonine). One can recognise a Fibronectin type-I domain in the interval 133–173 (EKCFEPQFFRFFHENEIWHRLEPAGVVKCQCKGPNAQCKPL). In terms of domain architecture, EGF-like 2 spans 174-210 (ASQVCRTNPCLNGGSCLQAEGHRLCRCAPSFAGRLCD). The region spanning 217 to 306 (CYDDRDRGLS…SWNYCRLAPC (90 aa)) is the Kringle domain. Residues Asn-251 and Asn-282 are each glycosylated (N-linked (GlcNAc...) asparagine). The Peptidase S1 domain maps to 369-611 (VVGGLVALPG…YLAWIREHTA (243 aa)). His-408 serves as the catalytic Charge relay system. Residue Asn-429 is glycosylated (N-linked (GlcNAc...) asparagine). Asp-457 (charge relay system) is an active-site residue. Ser-560 functions as the Charge relay system in the catalytic mechanism.

This sequence belongs to the peptidase S1 family. Interacts with HRG; the interaction, which is enhanced in the presence of zinc ions and inhibited by heparin-binding, inhibits factor XII autoactivation and contact-initiated coagulation. O- and N-glycosylated.

It localises to the secreted. It carries out the reaction Selective cleavage of Arg-|-Ile bonds in factor VII to form factor VIIa and factor XI to form factor XIa.. With respect to regulation, activity is promoted in the presence of negatively charged surfaces. Functionally, factor XII is a serum glycoprotein that participates in the initiation of blood coagulation, fibrinolysis, and the generation of bradykinin and angiotensin. Prekallikrein is cleaved by factor XII to form kallikrein, which then cleaves factor XII first to alpha-factor XIIa and then to beta-factor XIIa. Alpha-factor XIIa activates factor XI to factor XIa. The sequence is that of Coagulation factor XII (F12) from Bos taurus (Bovine).